The following is a 69-amino-acid chain: Sec-independent protein translocase protein TatA (69 aa).

The chain crosses the membrane as a helical span at residues 1-21 (MFGLGGQELVLILLIILLLFG). Residues 48-69 (EELNKAVDDTPEKEKKSSSEKS) form a disordered region.

The protein belongs to the TatA/E family. In terms of assembly, forms a complex with TatC.

The protein resides in the cell inner membrane. Functionally, part of the twin-arginine translocation (Tat) system that transports large folded proteins containing a characteristic twin-arginine motif in their signal peptide across membranes. TatA could form the protein-conducting channel of the Tat system. The sequence is that of Sec-independent protein translocase protein TatA from Chlorobium phaeobacteroides (strain BS1).